A 1719-amino-acid polypeptide reads, in one-letter code: MSIQTRSAVGYSGGQVTWTGPDECAWTCGNAVVLHTLGSKAQRVLKGTGFGISCFAVNKRHGLLAIAEKGLKPMVTVYSTKTLQPLAKLLPGDVREEGAGGGADKPSGSGAVSGKQQSSGPSVVLGVTCLAFSNDGERLAVCGDEPDCSVIVYGWRKAEVLGRCRMPAAASSASSTSPASSVSFHPLDASVLATSGPGGACAVWFLEPLWEKAVFRPLQLAAGALPAGAEVTCHAWGPGGLYVGTSTGGLVLLDTATMAPLQLHAAAGGAAGEVAGGASGGASSPTPGASSGGAAGGSVVAVVPDAVTSGAAVTALTLNRDLVAVAGADGSVRVFVSVPAAAAAITPEPLALSHEVWLGRAGPARGVAVASAECGGADHATLLLGCPDGTMYRAPLAPKQGGGPTHSVLVVDCHVGRLAGVVPHPGGGAFLTTGSDGSVRVWSTTDGALLGRKQLSSAQTALAAAAPGASLAAVGSETGVVRVLVLPPASTAASAAASDAPLPALRVLFRQRLHSAPVDVLVFSPANDLLLSAGRDGIAWLCSVDARGGRVRPLGCLSLPPGERVLSATWPRSDGGSGAASGHAQAGPVSTTSAEGDEPSCLLSLAGGGLMCLTASAELHSGNWRNPYPDMVLLVTIKLLRLEVAMLAVAAVPGDRYGDAYGLGADKQLHKLVLPAEAAAWAGLRARPLRSAQHVPAHARASGGVAVAPGGHLLASGAADGTVALRNMSLITLAAQQGGDGAGAGLHDITAGGVVTVSFDATGRYLASAGADGALFVYELSKRAAVANRLATLRSRIADLLAANEAAPELERLTRNDMIVDVGLVEELQRETENRVAAVQAAVKKEHLRTELLAERVRRMVWDSMAVKGAVISGLRAPPGQHERVLKQVTMLRRVELAEQAALGVIPYGLIDFDVYCNTRKALQVQLLKQKMRDVQAGFNTDFNKVAAAKKADCDRIADLNARLDDTLKDLRKLGAGPPAGLLDERFSLSAQQDTRDNIAATVLMVREEEVGAERYVSPAERAKQEAARKADEDAAKRSAKDNAGERALRQMMGGTLAARGGGHDESNPFSLPKPAWLVALGVEPDAVNPKLITEEQNRELKEWQAKEKSLQEERAKRITVLEMELRTAKAAVEELTSEAVERGLLARLGAAKEAHGRAASELSERRAALAELESRQAQLGADERLMDRNFKKEFAEADIHLNRLLQLYRARKPEQLASMPGGGAIGAAGGHQSGVEASSGSFSRVPGGAPGLHRQASLAHSPSGAAAAGGEAAGAATAAGGAGSSGGAAPCGAAGNPSTGPPANITPTYTHALPLPHAAVAATTLNPFPDAPPGASGHDRPGSSALHPSHSHASVHGNHAHHHLSAAAAAAGHSDPLHNLSGLKPEGLDAALWDRFVAYRAERLAAEAGARAAAGDLVLARRDLPELESREAALGSEMEVLMGSITALRSERKVAAYDNEVQLRLLAGQVEAMPPRPASADMSDARLLGRGVVESLNSVVLGKGTKKVELLTAMKDFKRGIYAAQWEAQAADMRLDDLRAKIRDLQLLHVTRDMQTVLKDGEDRSSALEAANLEALMKQRERLHAKALEDKRRRLRKLAADVSSRSAQNQEVAVHLVTLGKVLEEQQRLQAGMQSANDQATRRMRSLVTHKKLKEIALAQQNELGELRQQLEKLRLRTYPTFIESGAVAGMPSPPRRLPPDIKLLAGSPSSSSVAGRT.

The interval 94–120 is disordered; the sequence is VREEGAGGGADKPSGSGAVSGKQQSSG. WD repeat units lie at residues 122–165, 174–214, 226–263, 308–345, 413–452, and 513–552; these read SVVL…GRCR, SSTS…EKAV, PAGA…PLQL, TSGA…AAAI, CHVG…LLGR, and LHSA…GRVR. Residues 569–596 form a disordered region; the sequence is TWPRSDGGSGAASGHAQAGPVSTTSAEG. 2 WD repeats span residues 697 to 736 and 749 to 788; these read AHAR…LAAQ and ITAG…AVAN. Positions 1022-1045 are disordered; it reads RAKQEAARKADEDAAKRSAKDNAG. The WD 9 repeat unit spans residues 1073 to 1114; that stretch reads PKPAWLVALGVEPDAVNPKLITEEQNRELKEWQAKEKSLQEE. Disordered stretches follow at residues 1220–1269, 1277–1296, and 1325–1372; these read MPGG…AAAA, ATAA…GAAG, and TLNP…AAAA. The span at 1221-1233 shows a compositional bias: gly residues; that stretch reads PGGGAIGAAGGHQ. Over residues 1257 to 1269 the composition is skewed to low complexity; the sequence is ASLAHSPSGAAAA. Residues 1344–1358 show a composition bias toward low complexity; that stretch reads SSALHPSHSHASVHG. 2 coiled-coil regions span residues 1524–1609 and 1651–1679; these read AAQW…RSAQ and HKKL…RLRT. The tract at residues 1685-1719 is disordered; that stretch reads ESGAVAGMPSPPRRLPPDIKLLAGSPSSSSVAGRT. A compositionally biased stretch (polar residues) spans 1709 to 1719; that stretch reads SPSSSSVAGRT.

It belongs to the CFAP43 family.

It is found in the cell projection. The protein localises to the cilium. It localises to the flagellum. Its subcellular location is the cytoplasm. The protein resides in the cytoskeleton. It is found in the flagellum axoneme. Its function is as follows. Flagellar protein involved in flagellum axoneme organization and function. In Chlamydomonas reinhardtii (Chlamydomonas smithii), this protein is Cilia- and flagella-associated protein 43.